Here is a 1357-residue protein sequence, read N- to C-terminus: DNA-directed RNA polymerase subunit beta (1357 aa).

The protein belongs to the RNA polymerase beta chain family. In terms of assembly, the RNAP catalytic core consists of 2 alpha, 1 beta, 1 beta' and 1 omega subunit. When a sigma factor is associated with the core the holoenzyme is formed, which can initiate transcription.

It carries out the reaction RNA(n) + a ribonucleoside 5'-triphosphate = RNA(n+1) + diphosphate. Its function is as follows. DNA-dependent RNA polymerase catalyzes the transcription of DNA into RNA using the four ribonucleoside triphosphates as substrates. The chain is DNA-directed RNA polymerase subunit beta from Pseudomonas putida (strain W619).